Consider the following 421-residue polypeptide: MDKLLIEGNGPLSGEIRVSGAKNAALPIMCAALLTPEPFTLHNVPNLQDVRTMLKLLRQMGVEGTQDGHDVTLDAAAIDAPEAPYDLVKTMRASILVLGPLLARFGHARVSLPGGCGIGARPVDQHIKGLQQMGAEIVIEHGYIEAKLADGAKRLHGARIVTDMVTVTGTENLLMAAVLADGETVLENAAREPEVTDLANLLVKMGARIDGIGTDRLVVQGVEALRGAEHTVIADRIEAGTFLCAVAAAGGDVTLRGVPPGILDAVLDKLREAGVTLTMGDDWIRVQMHGRPKAVSFRTSEYPAFPTDMQAQFMMLNCIAEGAALVTETIFENRFMHVQELNRLGANIITEGNTAAVTGVEQLSGATVMATDLRASASLVIAGLVAQGETLVDRIYHLDRGYDCIEDKLSAVGAKIRRIQG.

22 to 23 (KN) contacts phosphoenolpyruvate. UDP-N-acetyl-alpha-D-glucosamine is bound at residue Arg-92. Cys-116 functions as the Proton donor in the catalytic mechanism. Cys-116 is subject to 2-(S-cysteinyl)pyruvic acid O-phosphothioketal. UDP-N-acetyl-alpha-D-glucosamine is bound by residues 121-125 (RPVDQ), Asp-308, and Ile-330.

The protein belongs to the EPSP synthase family. MurA subfamily.

Its subcellular location is the cytoplasm. It carries out the reaction phosphoenolpyruvate + UDP-N-acetyl-alpha-D-glucosamine = UDP-N-acetyl-3-O-(1-carboxyvinyl)-alpha-D-glucosamine + phosphate. Its pathway is cell wall biogenesis; peptidoglycan biosynthesis. In terms of biological role, cell wall formation. Adds enolpyruvyl to UDP-N-acetylglucosamine. The protein is UDP-N-acetylglucosamine 1-carboxyvinyltransferase of Ralstonia nicotianae (strain ATCC BAA-1114 / GMI1000) (Ralstonia solanacearum).